Here is a 138-residue protein sequence, read N- to C-terminus: Cytosolic calcium-binding protein 2 (138 aa).

A compositionally biased stretch (low complexity) spans 31-41 (TEVTQQPEESV). Residues 31 to 122 (TEVTQQPEES…KKTEVVEEKQ (92 aa)) are disordered. 6 consecutive repeat copies span residues 62–68 (VEEAEKK), 71–75 (ETEKK), 92–98 (VEEEEKK), 109–114 (VEEEKK), 118–122 (VEEKQ), and 131–135 (VAVEK). The interval 62–135 (VEEAEKKDEE…AAAEEVAVEK (74 aa)) is 6 X 5 AA approximate repeats of V-E-E-K-K. Basic and acidic residues predominate over residues 64-85 (EAEKKDEETEKKTEEKDEKTEV). Positions 110 to 122 (EEEKKTEVVEEKQ) are enriched in basic and acidic residues.

In terms of tissue distribution, predominantly expressed in roots (e.g. in endodermis in the stele) and stems, to a lower extent in shoots, flowers and siliques, and, at low levels, in leaves.

The protein localises to the cytoplasm. The protein resides in the cytosol. In terms of biological role, binds calcium Ca(2+) and may act as a signal mediator to buffer Ca(2+). This Arabidopsis thaliana (Mouse-ear cress) protein is Cytosolic calcium-binding protein 2.